Reading from the N-terminus, the 357-residue chain is Protein Wnt-8c (357 aa).

Positions 1 to 16 (MRGSTFLLLSIVGIYG) are cleaved as a signal peptide. Cysteines 55 and 66 form a disulfide. A glycan (N-linked (GlcNAc...) asparagine) is linked at asparagine 104. Cystine bridges form between cysteine 105-cysteine 113, cysteine 115-cysteine 133, cysteine 181-cysteine 195, cysteine 183-cysteine 190, cysteine 260-cysteine 298, cysteine 276-cysteine 291, cysteine 313-cysteine 328, cysteine 315-cysteine 325, and cysteine 320-cysteine 321. A lipid anchor (O-palmitoleoyl serine) is attached at serine 187. Asparagine 263 and asparagine 282 each carry an N-linked (GlcNAc...) asparagine glycan. The N-linked (GlcNAc...) asparagine glycan is linked to asparagine 346.

The protein belongs to the Wnt family. Post-translationally, palmitoleoylation is required for efficient binding to frizzled receptors. Depalmitoleoylation leads to Wnt signaling pathway inhibition. Proteolytic processing by tiki1 and tiki2 promotes oxidation and formation of large disulfide-bond oligomers, leading to inactivation of wnt8c. As to expression, cells that form rhombomere 4. Hensen node and the neural plate immediately anterior to it.

The protein localises to the secreted. The protein resides in the extracellular space. Its subcellular location is the extracellular matrix. Functionally, ligand for members of the frizzled family of seven transmembrane receptors. Probable developmental protein. Is likely to signal over only few cell diameters. May be involved in the regulation of axis formation and in the rhombomere specification. The chain is Protein Wnt-8c (WNT8C) from Gallus gallus (Chicken).